Here is a 77-residue protein sequence, read N- to C-terminus: Acyl carrier protein (77 aa).

One can recognise a Carrier domain in the interval serine 2–serine 77. Serine 37 is subject to O-(pantetheine 4'-phosphoryl)serine.

This sequence belongs to the acyl carrier protein (ACP) family. 4'-phosphopantetheine is transferred from CoA to a specific serine of apo-ACP by AcpS. This modification is essential for activity because fatty acids are bound in thioester linkage to the sulfhydryl of the prosthetic group.

The protein localises to the cytoplasm. It functions in the pathway lipid metabolism; fatty acid biosynthesis. In terms of biological role, carrier of the growing fatty acid chain in fatty acid biosynthesis. This chain is Acyl carrier protein, found in Paramagnetospirillum magneticum (strain ATCC 700264 / AMB-1) (Magnetospirillum magneticum).